The chain runs to 401 residues: Probable N-acetyl-gamma-glutamyl-phosphate reductase, chloroplastic (401 aa).

A chloroplast-targeting transit peptide spans 1-48 (MSTASAFSSIQGCWFKGERKIRVADKRAKRLTLGSHVASPSSMSFRVS). Residue Cys205 is part of the active site.

It belongs to the NAGSA dehydrogenase family. Type 1 subfamily. In terms of assembly, homotetramer.

Its subcellular location is the plastid. The protein localises to the chloroplast. The catalysed reaction is N-acetyl-L-glutamate 5-semialdehyde + phosphate + NADP(+) = N-acetyl-L-glutamyl 5-phosphate + NADPH + H(+). The protein operates within amino-acid biosynthesis; L-arginine biosynthesis; N(2)-acetyl-L-ornithine from L-glutamate: step 3/4. The sequence is that of Probable N-acetyl-gamma-glutamyl-phosphate reductase, chloroplastic from Arabidopsis thaliana (Mouse-ear cress).